The sequence spans 151 residues: Transcriptional repressor NrdR (151 aa).

Residues 3-34 fold into a zinc finger; the sequence is CPHCGNCDDKVMESRTLAQGDCIRRRRECLAC. The region spanning 49–141 is the ATP-cone domain; sequence FMVIKKDGRR…VYKQFSNLDE (93 aa).

The protein belongs to the NrdR family. Zn(2+) serves as cofactor.

In terms of biological role, negatively regulates transcription of bacterial ribonucleotide reductase nrd genes and operons by binding to NrdR-boxes. The polypeptide is Transcriptional repressor NrdR (Treponema denticola (strain ATCC 35405 / DSM 14222 / CIP 103919 / JCM 8153 / KCTC 15104)).